Here is a 588-residue protein sequence, read N- to C-terminus: Histone deacetylase 9 (588 aa).

At S22 the chain carries Phosphoserine. The tract at residues 23-27 is interaction with CTBP1; that stretch reads PLDLR. The segment covering 110–147 has biased composition (basic and acidic residues); it reads RQEQEVERHRREQQLPPLRGKDRGRERAVASTEVKQKL. Disordered regions lie at residues 110 to 170, 183 to 242, and 264 to 301; these read RQEQ…HSVG, TSLD…SSPL, and SSVSSSSPGSGPSSPNNGPAGNVTENEASALPPTPHPE. Positions 136-154 are interaction with MEF2; that stretch reads RAVASTEVKQKLQEFLLSK. Polar residues-rich tracts occupy residues 154 to 166 and 185 to 199; these read KSATKDTPTNGKN and LDQSSPPLSGTSPSY. Residues 175–343 are interaction with MAPK10; that stretch reads LWYTAAHHTS…LPAVPSPLNA (169 aa). The segment covering 208 to 219 has biased composition (basic and acidic residues); sequence DSKDDFPLRKTA. The interval 218 to 261 is interaction with ETV6; that stretch reads TASEPNLKVRSRLKQKVAERRSSPLLRRKDGNLVTSFKKRVFEV. S220 is modified (phosphoserine). Basic and acidic residues predominate over residues 233–242; the sequence is KVAERRSSPL. The residue at position 240 (S240) is a Phosphoserine; by DYRK1B. Residues 264–284 are compositionally biased toward low complexity; sequence SSVSSSSPGSGPSSPNNGPAG. S450 is modified (phosphoserine). The tract at residues 493–533 is disordered; it reads QLKQPGSHLEEAEEELQGDQSMEDRAASKDNSARSDSSACV. Positions 514 to 525 are enriched in basic and acidic residues; it reads MEDRAASKDNSA. The residue at position 552 (S552) is a Phosphoserine.

It belongs to the histone deacetylase family. HD type 2 subfamily. As to quaternary structure, homodimer. Interacts with ETV6. Interacts with MEF2, HDAC1, HDAC3, HDAC4, HDAC5, CTBP1 and MAPK10. The phosphorylated form interacts with 14-3-3. Interacts with FOXP3 in the absence of T-cell stimulation. Sumoylated. Post-translationally, phosphorylated on Ser-220 and Ser-450; which promotes 14-3-3-binding, impairs interaction with MEF2, and antagonizes antimyogenic activity. Phosphorylated on Ser-240 by DYRK1B; which impairs nuclear accumulation. Phosphorylated by the PKC kinases PKN1 and PKN2, impairing nuclear import. In terms of tissue distribution, expressed at high levels in heart, brain and spleen. Expressed in skeletal muscle.

It localises to the nucleus. It carries out the reaction N(6)-acetyl-L-lysyl-[histone] + H2O = L-lysyl-[histone] + acetate. In terms of biological role, devoided of intrinsic deacetylase activity, promotes the deacetylation of lysine residues on the N-terminal part of the core histones (H2A, H2B, H3 and H4) by recruiting HDAC1 and HDAC3. Histone deacetylation gives a tag for epigenetic repression and plays an important role in transcriptional regulation, cell cycle progression and developmental events. Represses MEF2-dependent transcription, inhibits skeletal myogenesis and may be involved in heart development. Protects neurons from apoptosis, both by inhibiting JUN phosphorylation by MAPK10 and by repressing JUN transcription via HDAC1 recruitment to JUN promoter. In Mus musculus (Mouse), this protein is Histone deacetylase 9 (Hdac9).